A 458-amino-acid polypeptide reads, in one-letter code: Ammonium transporter Rh type B (458 aa).

At 1-13 (MAGSSRRAGGRRL) the chain is on the cytoplasmic side. The chain crosses the membrane as a helical span at residues 14–34 (QLPLLCLLLQGATAILFAVFV). Over 35–61 (RYNHETDAALWHWGNHSNPDNEFYFRY) the chain is Extracellular. An N-linked (GlcNAc...) asparagine glycan is attached at Asn49. A helical transmembrane segment spans residues 62–82 (PSFQDVHTMIFVGFGFLMAFL). Topologically, residues 83-86 (QRYG) are cytoplasmic. Residues 87–107 (FSSVGFTFLLAAFALQWSTLV) form a helical membrane-spanning segment. Over 108–124 (QGFLHTFHGGHIHIGVE) the chain is Extracellular. Residues 125–145 (SMINADFCAGAVLISFGAILG) traverse the membrane as a helical segment. Residues 146–149 (KTGP) lie on the Cytoplasmic side of the membrane. The chain crosses the membrane as a helical span at residues 150-170 (AQLLLMALLEVVLFGLNEFVL). The Extracellular portion of the chain corresponds to 171 to 178 (LSLLGVKD). Residues 179-201 (AGGSMTIHTFGAYFGLVLSRVLY) form a helical membrane-spanning segment. Over 202–219 (RPQLEKSKHRQSSVYHSD) the chain is Cytoplasmic. A helical membrane pass occupies residues 220 to 240 (LFAMIGTIFLWIFWPSFNSAP). Residues 241–251 (TPLGDGQHRTA) lie on the Extracellular side of the membrane. The helical transmembrane segment at 252–272 (LNTYYSLTASTLSTFALSALV) threads the bilayer. Over 273-282 (GRDGRLDMVH) the chain is Cytoplasmic. A helical membrane pass occupies residues 283–303 (VQNAALAGGVVVGTSAEMMLT). Residue Pro304 is a topological domain, extracellular. A helical membrane pass occupies residues 305 to 325 (FGALAAGFLAGTVSTLGFKFF). Topologically, residues 326-346 (TPILESKFKIQDTCGVHNLHG) are cytoplasmic. The helical transmembrane segment at 347–367 (MPGVLGALLGVLVAGLATHDS) threads the bilayer. Over 368–393 (YGEGLESVFPLIAEGQRSSTSQALHQ) the chain is Extracellular. A helical transmembrane segment spans residues 394-414 (LFGLFVTLIFASVGGGLGGLL). The Cytoplasmic segment spans residues 415-458 (LRLPFLDSPPDSQCYEDQIYWEVPEEHADLAQGSLRPEEPDTQA). Positions 416–424 (RLPFLDSPP) are interaction with ANK3. The Basolateral sorting signal motif lies at 429–432 (YEDQ).

Belongs to the ammonium transporter (TC 2.A.49) family. Rh subfamily. As to quaternary structure, interacts (via C-terminus) with ANK2 and ANK3; required for targeting to the basolateral membrane. N-glycosylated.

It is found in the cell membrane. It localises to the basolateral cell membrane. The enzyme catalyses NH4(+)(in) = NH4(+)(out). It catalyses the reaction methylamine(out) = methylamine(in). It carries out the reaction CO2(out) = CO2(in). In terms of biological role, ammonium transporter involved in the maintenance of acid-base homeostasis. Transports ammonium and its related derivative methylammonium across the basolateral plasma membrane of epithelial cells likely contributing to renal transepithelial ammonia transport and ammonia metabolism. May transport either NH4(+) or NH3 ammonia species predominantly mediating an electrogenic NH4(+) transport. May act as a CO2 channel providing for renal acid secretion. This is Ammonium transporter Rh type B (RHBG) from Sus scrofa (Pig).